The sequence spans 124 residues: Small ribosomal subunit protein uS12 (124 aa).

Position 89 is a 3-methylthioaspartic acid (Asp89).

Belongs to the universal ribosomal protein uS12 family. In terms of assembly, part of the 30S ribosomal subunit. Contacts proteins S8 and S17. May interact with IF1 in the 30S initiation complex.

In terms of biological role, with S4 and S5 plays an important role in translational accuracy. Interacts with and stabilizes bases of the 16S rRNA that are involved in tRNA selection in the A site and with the mRNA backbone. Located at the interface of the 30S and 50S subunits, it traverses the body of the 30S subunit contacting proteins on the other side and probably holding the rRNA structure together. The combined cluster of proteins S8, S12 and S17 appears to hold together the shoulder and platform of the 30S subunit. This is Small ribosomal subunit protein uS12 from Blochmanniella pennsylvanica (strain BPEN).